A 141-amino-acid polypeptide reads, in one-letter code: Nucleoside diphosphate kinase (141 aa).

ATP is bound by residues lysine 11, phenylalanine 59, arginine 87, threonine 93, arginine 104, and asparagine 114. Histidine 117 (pros-phosphohistidine intermediate) is an active-site residue.

This sequence belongs to the NDK family. Homotetramer. Mg(2+) serves as cofactor.

It localises to the cytoplasm. It catalyses the reaction a 2'-deoxyribonucleoside 5'-diphosphate + ATP = a 2'-deoxyribonucleoside 5'-triphosphate + ADP. The catalysed reaction is a ribonucleoside 5'-diphosphate + ATP = a ribonucleoside 5'-triphosphate + ADP. Functionally, major role in the synthesis of nucleoside triphosphates other than ATP. The ATP gamma phosphate is transferred to the NDP beta phosphate via a ping-pong mechanism, using a phosphorylated active-site intermediate. The protein is Nucleoside diphosphate kinase of Vibrio parahaemolyticus serotype O3:K6 (strain RIMD 2210633).